The following is a 480-amino-acid chain: LETM1 domain-containing protein LETM2, mitochondrial (480 aa).

The N-terminal 25 residues, 1-25, are a transit peptide targeting the mitochondrion; sequence MAFYSYNSFLAIFWTRLPGHSVYPS. Over 26 to 175 the chain is Mitochondrial intermembrane; sequence CSHFPSLAFL…LLRTCADVFR (150 aa). Residues 88–118 form a disordered region; that stretch reads GKPQLEQTGKPKAASPQPTKEAKTETTEEKR. Residues 107–118 show a composition bias toward basic and acidic residues; that stretch reads KEAKTETTEEKR. The chain crosses the membrane as a helical span at residues 176-196; that stretch reads LVPFMVFIIVPFMEFLIPVFL. Over 197–480 the chain is Mitochondrial matrix; that stretch reads KLFPDMLPST…QNSKADSKGA (284 aa). The region spanning 219 to 436 is the Letm1 RBD domain; that stretch reads KTMAAKLEIA…SAPQLKGTKD (218 aa). Residues 398–444 are disordered; the sequence is ELPPNIETPKPNLGIPTPPPPESKENLTDSAPQLKGTKDEEFIQLPP.

It localises to the mitochondrion inner membrane. This Mus musculus (Mouse) protein is LETM1 domain-containing protein LETM2, mitochondrial (Letm2).